Here is a 518-residue protein sequence, read N- to C-terminus: Protein FAM98A (518 aa).

Disordered stretches follow at residues 297–415 (VLMG…GHSS) and 434–518 (GSGY…HYTS). Over residues 302–311 (VPDRGGRPNE) the composition is skewed to basic and acidic residues. Gly residues-rich tracts occupy residues 349–364 (GGRG…GGRG), 383–396 (WTDG…GYQD), and 405–415 (QPGGYHGGHSS). Residues 447–459 (RYQDGGHHGDRGG) are compositionally biased toward basic and acidic residues. The span at 460–484 (GRGGRGGRGGRGGRAGQGGGWGGRG) shows a compositional bias: gly residues. A compositionally biased stretch (low complexity) spans 488–504 (YHQGGQFEQHFQHGGYQ). Positions 505–518 (YNHSGFGQGRHYTS) are enriched in polar residues.

The protein belongs to the FAM98 family. Interacts (via N- and C-terminus) with DDX1. Interacts (via N- and C-terminus) with C14orf166. Interacts with FAM98B. Interacts with PLEKHM1 (via N- and C-terminus). As to expression, expressed strongly in colorectal cancer cells. Expressed strongly in colorectal cancer tissues compared to wild-type colon samples (at protein level). Expressed strongly in colorectal cancer tissues compared to wild-type colon samples.

Functionally, positively stimulates PRMT1-induced protein arginine methylation. Involved in skeletal homeostasis. Positively regulates lysosome peripheral distribution and ruffled border formation in osteoclasts. The protein is Protein FAM98A of Homo sapiens (Human).